A 933-amino-acid polypeptide reads, in one-letter code: Valine--tRNA ligase (933 aa).

Residues 1-24 (MIERVKTTKLSEASGLPKTYDPVG) are disordered. Positions 57–67 (PNVTGSLHMGH) match the 'HIGH' region motif. Residues 557 to 561 (KMSKS) carry the 'KMSKS' region motif. Residue Lys560 coordinates ATP. Positions 866–932 (LIDIASLRSR…RLVKERLMGL (67 aa)) form a coiled coil.

The protein belongs to the class-I aminoacyl-tRNA synthetase family. ValS type 1 subfamily. Monomer.

It is found in the cytoplasm. The enzyme catalyses tRNA(Val) + L-valine + ATP = L-valyl-tRNA(Val) + AMP + diphosphate. Functionally, catalyzes the attachment of valine to tRNA(Val). As ValRS can inadvertently accommodate and process structurally similar amino acids such as threonine, to avoid such errors, it has a 'posttransfer' editing activity that hydrolyzes mischarged Thr-tRNA(Val) in a tRNA-dependent manner. The protein is Valine--tRNA ligase of Prochlorococcus marinus (strain NATL2A).